A 191-amino-acid chain; its full sequence is uncharacterized protein (191 aa).

This sequence to E.coli YecM.

This is an uncharacterized protein from Haemophilus influenzae (strain ATCC 51907 / DSM 11121 / KW20 / Rd).